The following is a 76-amino-acid chain: MGSFSIWHWLIVLVIVALVFGTKKIGSMGTDVGKAVKGFKDGMKGEDDKPAAQNAAPSQVADKGTVDVEVKEKSNS.

A helical membrane pass occupies residues 1 to 21 (MGSFSIWHWLIVLVIVALVFG). Composition is skewed to basic and acidic residues over residues 39–50 (FKDGMKGEDDKP) and 64–76 (GTVDVEVKEKSNS). The segment at 39–76 (FKDGMKGEDDKPAAQNAAPSQVADKGTVDVEVKEKSNS) is disordered.

This sequence belongs to the TatA/E family. In terms of assembly, the Tat system comprises two distinct complexes: a TatABC complex, containing multiple copies of TatA, TatB and TatC subunits, and a separate TatA complex, containing only TatA subunits. Substrates initially bind to the TatABC complex, which probably triggers association of the separate TatA complex to form the active translocon.

It localises to the cell inner membrane. Its function is as follows. Part of the twin-arginine translocation (Tat) system that transports large folded proteins containing a characteristic twin-arginine motif in their signal peptide across membranes. TatA could form the protein-conducting channel of the Tat system. This is Sec-independent protein translocase protein TatA from Herminiimonas arsenicoxydans.